The chain runs to 620 residues: Chaperone protein DnaK (620 aa).

Threonine 197 is modified (phosphothreonine; by autocatalysis). A disordered region spans residues 597–620 (AMANKNNAEQPKKKDDDVIDAEVE).

Belongs to the heat shock protein 70 family.

Its function is as follows. Acts as a chaperone. The chain is Chaperone protein DnaK from Helicobacter pylori (strain Shi470).